The following is an 883-amino-acid chain: Valine--tRNA ligase (883 aa).

The short motif at 52 to 62 (PNVTGRLHLGH) is the 'HIGH' region element. A 'KMSKS' region motif is present at residues 529–533 (KMSKS). Lys-532 is a binding site for ATP. A coiled-coil region spans residues 813-848 (LEGLIDFDKEIKRLENELAKWTKEVERVQKKLSNQG).

Belongs to the class-I aminoacyl-tRNA synthetase family. ValS type 1 subfamily. Monomer.

It localises to the cytoplasm. It carries out the reaction tRNA(Val) + L-valine + ATP = L-valyl-tRNA(Val) + AMP + diphosphate. Its function is as follows. Catalyzes the attachment of valine to tRNA(Val). As ValRS can inadvertently accommodate and process structurally similar amino acids such as threonine, to avoid such errors, it has a 'posttransfer' editing activity that hydrolyzes mischarged Thr-tRNA(Val) in a tRNA-dependent manner. The polypeptide is Valine--tRNA ligase (Oceanobacillus iheyensis (strain DSM 14371 / CIP 107618 / JCM 11309 / KCTC 3954 / HTE831)).